The primary structure comprises 311 residues: Olfactory receptor 5AN1 (311 aa).

Residues 1-26 (MTGGGNITEITYFILLGFSDFPRIIK) lie on the Extracellular side of the membrane. Asparagine 6 carries N-linked (GlcNAc...) asparagine glycosylation. Residues 27–47 (VLFTIFLVIYITSLAWNLSLI) traverse the membrane as a helical segment. The Cytoplasmic segment spans residues 48–55 (VLIRMDSH). Residues 56 to 76 (LHTPMYFFLSNLSFIDVCYIS) traverse the membrane as a helical segment. Residues 77 to 100 (STVPKMLSNLLQEQQTITFVGCII) are Extracellular-facing. Cysteine 98 and cysteine 190 are joined by a disulfide. A helical membrane pass occupies residues 101–121 (QYFIFSTMGLSESCLMTAMAY). At 122–134 (DRYAAICNPLLYS) the chain is on the cytoplasmic side. Residues 135–155 (SIMSPTLCVWMVLGAYMTGLT) form a helical membrane-spanning segment. Residues 156–197 (ASLFQIGALLQLHFCGSNVIRHFFCDMPQLLILSCTDTFFVQ) lie on the Extracellular side of the membrane. Residues 198 to 218 (VMTAILTMFFGIASALVIMIS) form a helical membrane-spanning segment. The Cytoplasmic portion of the chain corresponds to 219 to 238 (YGYIGISIMKITSAKGRSKA). Residues 239 to 259 (FNTCASHLTAVSLFYTSGIFV) form a helical membrane-spanning segment. Residues 260-272 (YLSSSSGGSSSFD) are Extracellular-facing. The chain crosses the membrane as a helical span at residues 273-293 (RFASVFYTVVIPMLNPLIYSL). Over 294–311 (RNKEIKDALKRLQKRKCC) the chain is Cytoplasmic.

It belongs to the G-protein coupled receptor 1 family.

Its subcellular location is the cell membrane. Functionally, odorant receptor for musk, which specifically recognizes muscone, musk xylol, and musk ketone. Ligand-binding causes a conformation change that triggers signaling via G(s)-class of G alpha protein GNAL, activating adenylyl cyclase. This Homo sapiens (Human) protein is Olfactory receptor 5AN1.